The sequence spans 200 residues: UPF0316 protein Mhun_0543 (200 aa).

Helical transmembrane passes span 3–23, 44–64, and 71–91; these read VGFLSSDLFTFGLIPVLIFLA, FIAPVFGFFEVTIWLLAIGQV, and PICYIAYGAGFAAGTYIGMEL.

This sequence belongs to the UPF0316 family.

The protein localises to the cell membrane. The sequence is that of UPF0316 protein Mhun_0543 from Methanospirillum hungatei JF-1 (strain ATCC 27890 / DSM 864 / NBRC 100397 / JF-1).